The following is a 617-amino-acid chain: Dihydroxy-acid dehydratase (617 aa).

Asp-81 contacts Mg(2+). Residue Cys-122 participates in [2Fe-2S] cluster binding. Asp-123 and Lys-124 together coordinate Mg(2+). The residue at position 124 (Lys-124) is an N6-carboxylysine. [2Fe-2S] cluster is bound at residue Cys-195. A Mg(2+)-binding site is contributed by Glu-490. Catalysis depends on Ser-516, which acts as the Proton acceptor.

It belongs to the IlvD/Edd family. Homodimer. It depends on [2Fe-2S] cluster as a cofactor. Mg(2+) is required as a cofactor.

It carries out the reaction (2R)-2,3-dihydroxy-3-methylbutanoate = 3-methyl-2-oxobutanoate + H2O. The catalysed reaction is (2R,3R)-2,3-dihydroxy-3-methylpentanoate = (S)-3-methyl-2-oxopentanoate + H2O. It functions in the pathway amino-acid biosynthesis; L-isoleucine biosynthesis; L-isoleucine from 2-oxobutanoate: step 3/4. It participates in amino-acid biosynthesis; L-valine biosynthesis; L-valine from pyruvate: step 3/4. Functions in the biosynthesis of branched-chain amino acids. Catalyzes the dehydration of (2R,3R)-2,3-dihydroxy-3-methylpentanoate (2,3-dihydroxy-3-methylvalerate) into 2-oxo-3-methylpentanoate (2-oxo-3-methylvalerate) and of (2R)-2,3-dihydroxy-3-methylbutanoate (2,3-dihydroxyisovalerate) into 2-oxo-3-methylbutanoate (2-oxoisovalerate), the penultimate precursor to L-isoleucine and L-valine, respectively. This chain is Dihydroxy-acid dehydratase, found in Acidiphilium cryptum (strain JF-5).